We begin with the raw amino-acid sequence, 229 residues long: UPF0758 protein CLH_0547 (229 aa).

One can recognise an MPN domain in the interval 107–229 (KIMSPNDIAM…FISLKEKGFI (123 aa)). Histidine 178, histidine 180, and aspartate 191 together coordinate Zn(2+). Residues 178 to 191 (HNHPSGDPTPSKED) carry the JAMM motif motif.

The protein belongs to the UPF0758 family.

This chain is UPF0758 protein CLH_0547, found in Clostridium botulinum (strain Alaska E43 / Type E3).